A 612-amino-acid chain; its full sequence is Siderophore iron transporter 1 (612 aa).

Residues S5, S21, S22, S36, and S41 each carry the phosphoserine modification. 14 helical membrane passes run 91–111 (ISFYICYFSIFLLFFAISFQA), 125–145 (FAGHSLLSTIAVANNIISAAI), 159–179 (LEAFLFSLLLYLVGLILMAAS), 188–208 (GSVLYNAGYTGVELIMTIFMA), 218–238 (LVLGISYLPFVVTIWIGPRVA), 249–269 (WGIAVWTILIPACSIPFLAVY), 299–319 (IIGLILMTAGLALVLLSISLA), 331–351 (FIVMIIIGGLCLIAFVLYEIF), 365–385 (EPTIGACCAMSFLFYITFYCW), 406–426 (YISYTYSFTSCATGFFLGILI), 434–453 (WYFVASIPVYILGQGLMIRY), 464–484 (IMPQIIVGIGGGVIANLLTVA), 495–515 (AIVTALVSTVTPIGGAVGSAI), and 573–593 (ILTSVATGFAGAMIFPVWFVA).

This sequence belongs to the major facilitator superfamily.

It is found in the membrane. Functionally, involved in the transport of siderophore iron and so has a role in iron homeostasis. This Schizosaccharomyces pombe (strain 972 / ATCC 24843) (Fission yeast) protein is Siderophore iron transporter 1 (str1).